The sequence spans 328 residues: Phosphatidylglycerol--prolipoprotein diacylglyceryl transferase (328 aa).

Helical transmembrane passes span 15–35, 57–77, and 106–126; these read VIQGIPITWYSLSYILIILIS, IFMFSLVLGAILGGRLASTLV, and GMAIHGGFLGAIIAPLITINT. Arg-156 is an a 1,2-diacyl-sn-glycero-3-phospho-(1'-sn-glycerol) binding site. A run of 2 helical transmembrane segments spans residues 242 to 262 and 289 to 309; these read GFIFGVYVMLYAFFRFFIEYL and ISMGQILSLTLMLSGLIWIIV.

The protein belongs to the Lgt family.

The protein resides in the cell inner membrane. The enzyme catalyses L-cysteinyl-[prolipoprotein] + a 1,2-diacyl-sn-glycero-3-phospho-(1'-sn-glycerol) = an S-1,2-diacyl-sn-glyceryl-L-cysteinyl-[prolipoprotein] + sn-glycerol 1-phosphate + H(+). Its pathway is protein modification; lipoprotein biosynthesis (diacylglyceryl transfer). Functionally, catalyzes the transfer of the diacylglyceryl group from phosphatidylglycerol to the sulfhydryl group of the N-terminal cysteine of a prolipoprotein, the first step in the formation of mature lipoproteins. In Borreliella burgdorferi (strain ATCC 35210 / DSM 4680 / CIP 102532 / B31) (Borrelia burgdorferi), this protein is Phosphatidylglycerol--prolipoprotein diacylglyceryl transferase.